The primary structure comprises 370 residues: 3-dehydroquinate synthase (370 aa).

Residues 112–116 (GVVGD), 136–137 (TS), Lys149, Lys158, and 176–179 (TLRT) contribute to the NAD(+) site. Positions 191, 254, and 276 each coordinate Zn(2+).

The protein belongs to the sugar phosphate cyclases superfamily. Dehydroquinate synthase family. Co(2+) serves as cofactor. Zn(2+) is required as a cofactor. It depends on NAD(+) as a cofactor.

It localises to the cytoplasm. It catalyses the reaction 7-phospho-2-dehydro-3-deoxy-D-arabino-heptonate = 3-dehydroquinate + phosphate. The protein operates within metabolic intermediate biosynthesis; chorismate biosynthesis; chorismate from D-erythrose 4-phosphate and phosphoenolpyruvate: step 2/7. In terms of biological role, catalyzes the conversion of 3-deoxy-D-arabino-heptulosonate 7-phosphate (DAHP) to dehydroquinate (DHQ). The polypeptide is 3-dehydroquinate synthase (Xanthomonas campestris pv. campestris (strain 8004)).